Reading from the N-terminus, the 937-residue chain is Leucine--tRNA ligase (937 aa).

The 'HIGH' region motif lies at 34 to 44 (PYPSGAMHIGH). The short motif at 609-613 (KMSSS) is the 'KMSKS' region element.

It belongs to the class-I aminoacyl-tRNA synthetase family.

It localises to the cytoplasm. The enzyme catalyses tRNA(Leu) + L-leucine + ATP = L-leucyl-tRNA(Leu) + AMP + diphosphate. This chain is Leucine--tRNA ligase, found in Methanothermobacter thermautotrophicus (strain ATCC 29096 / DSM 1053 / JCM 10044 / NBRC 100330 / Delta H) (Methanobacterium thermoautotrophicum).